The chain runs to 184 residues: ATP synthase subunit b 1 (184 aa).

Residues 36-55 (NILNLAILVGVLVFYGRKVV) traverse the membrane as a helical segment.

Belongs to the ATPase B chain family. In terms of assembly, F-type ATPases have 2 components, F(1) - the catalytic core - and F(0) - the membrane proton channel. F(1) has five subunits: alpha(3), beta(3), gamma(1), delta(1), epsilon(1). F(0) has four main subunits: a(1), b(1), b'(1) and c(10-14). The alpha and beta chains form an alternating ring which encloses part of the gamma chain. F(1) is attached to F(0) by a central stalk formed by the gamma and epsilon chains, while a peripheral stalk is formed by the delta, b and b' chains.

The protein resides in the cellular thylakoid membrane. F(1)F(0) ATP synthase produces ATP from ADP in the presence of a proton or sodium gradient. F-type ATPases consist of two structural domains, F(1) containing the extramembraneous catalytic core and F(0) containing the membrane proton channel, linked together by a central stalk and a peripheral stalk. During catalysis, ATP synthesis in the catalytic domain of F(1) is coupled via a rotary mechanism of the central stalk subunits to proton translocation. Functionally, component of the F(0) channel, it forms part of the peripheral stalk, linking F(1) to F(0). The polypeptide is ATP synthase subunit b 1 (Crocosphaera subtropica (strain ATCC 51142 / BH68) (Cyanothece sp. (strain ATCC 51142))).